Reading from the N-terminus, the 574-residue chain is Proline--tRNA ligase (574 aa).

The protein belongs to the class-II aminoacyl-tRNA synthetase family. ProS type 1 subfamily. Homodimer.

It localises to the cytoplasm. It carries out the reaction tRNA(Pro) + L-proline + ATP = L-prolyl-tRNA(Pro) + AMP + diphosphate. In terms of biological role, catalyzes the attachment of proline to tRNA(Pro) in a two-step reaction: proline is first activated by ATP to form Pro-AMP and then transferred to the acceptor end of tRNA(Pro). As ProRS can inadvertently accommodate and process non-cognate amino acids such as alanine and cysteine, to avoid such errors it has two additional distinct editing activities against alanine. One activity is designated as 'pretransfer' editing and involves the tRNA(Pro)-independent hydrolysis of activated Ala-AMP. The other activity is designated 'posttransfer' editing and involves deacylation of mischarged Ala-tRNA(Pro). The misacylated Cys-tRNA(Pro) is not edited by ProRS. The polypeptide is Proline--tRNA ligase (Sodalis glossinidius (strain morsitans)).